A 253-amino-acid polypeptide reads, in one-letter code: Imidazole glycerol phosphate synthase subunit HisF (253 aa).

Residues Asp-11 and Asp-130 contribute to the active site.

It belongs to the HisA/HisF family. In terms of assembly, heterodimer of HisH and HisF.

Its subcellular location is the cytoplasm. It carries out the reaction 5-[(5-phospho-1-deoxy-D-ribulos-1-ylimino)methylamino]-1-(5-phospho-beta-D-ribosyl)imidazole-4-carboxamide + L-glutamine = D-erythro-1-(imidazol-4-yl)glycerol 3-phosphate + 5-amino-1-(5-phospho-beta-D-ribosyl)imidazole-4-carboxamide + L-glutamate + H(+). It participates in amino-acid biosynthesis; L-histidine biosynthesis; L-histidine from 5-phospho-alpha-D-ribose 1-diphosphate: step 5/9. In terms of biological role, IGPS catalyzes the conversion of PRFAR and glutamine to IGP, AICAR and glutamate. The HisF subunit catalyzes the cyclization activity that produces IGP and AICAR from PRFAR using the ammonia provided by the HisH subunit. In Caldanaerobacter subterraneus subsp. tengcongensis (strain DSM 15242 / JCM 11007 / NBRC 100824 / MB4) (Thermoanaerobacter tengcongensis), this protein is Imidazole glycerol phosphate synthase subunit HisF.